The sequence spans 1202 residues: Nitric oxide synthase 3 (1202 aa).

The segment at 1–70 (MGNLKSVGQE…PPDGPKFPRV (70 aa)) is disordered. Gly-2 carries N-myristoyl glycine lipidation. S-palmitoyl cysteine attachment occurs at residues Cys-15 and Cys-26. A compositionally biased stretch (gly residues) spans 15-27 (CGLGLGLGLGLCG). Residues 33–65 (SPAPEPSQAPVPPSPTRPAPDHSPPLTRPPDGP) show a composition bias toward pro residues. Residues Cys-93 and Cys-98 each coordinate Zn(2+). The tract at residues 97-485 (RCLGSLVFPR…PDPWKGSAAK (389 aa)) is interaction with NOSIP. A (6R)-L-erythro-5,6,7,8-tetrahydrobiopterin-binding site is contributed by Ser-101. Residue Cys-183 coordinates heme b. L-arginine is bound by residues Gln-246, Trp-355, Tyr-356, and Glu-360. 3 residues coordinate (6R)-L-erythro-5,6,7,8-tetrahydrobiopterin: Ala-445, Trp-446, and Phe-459. Tyr-474 contacts heme b. Residues 489 to 509 (ITRKKTFKEVANAVKISASLM) are calmodulin-binding. The residue at position 494 (Thr-494) is a Phosphothreonine; by AMPK. The 184-residue stretch at 519–702 (ATILYGSETG…AFRGWAQAAF (184 aa)) folds into the Flavodoxin-like domain. The FMN site is built by Ser-525, Glu-526, Thr-527, Arg-529, Ser-571, and Thr-572. Residues Ser-614, Ser-632, and Ser-637 each carry the phosphoserine modification. FMN is bound by residues Ser-653, Cys-660, Glu-686, and Gln-690. One can recognise an FAD-binding FR-type domain in the interval 755–1001 (RKMFQATILS…IRGAPSFRLP (247 aa)). Arg-775 is a binding site for NADP(+). His-797 is an FAD binding site. Positions 817–843 (EDPPPSTEPVAVEQLEKGSPGGPPPGW) are disordered. Ser-835 carries the post-translational modification Phosphoserine. Residues Arg-937, Tyr-939, Ser-940, Thr-955, Ala-957, Tyr-961, Val-974, Cys-975, and Ser-976 each contribute to the FAD site. The NADP(+) site is built by Thr-1015, Arg-1048, Ser-1077, Arg-1078, Lys-1084, Tyr-1086, and Gln-1088. The residue at position 1174 (Thr-1174) is a Phosphothreonine. A Phosphoserine; by AMPK modification is found at Ser-1176. Ser-1178 carries the post-translational modification Phosphoserine.

The protein belongs to the NOS family. In terms of assembly, homodimer. Interacts with NOSIP and NOSTRIN. Interacts with HSP90AB1. Forms a complex with ASL, ASS1 and SLC7A1; the complex regulates cell-autonomous L-arginine synthesis and citrulline recycling while channeling extracellular L-arginine to nitric oxide synthesis pathway. The cofactor is heme b. FAD is required as a cofactor. Requires FMN as cofactor. It depends on (6R)-L-erythro-5,6,7,8-tetrahydrobiopterin as a cofactor. Phosphorylation by AMPK at Ser-1176 in the presence of Ca(2+)-calmodulin (CaM) activates activity. In absence of Ca(2+)-calmodulin, AMPK also phosphorylates Thr-494, resulting in inhibition of activity. As to expression, expressed constitutively by vascular endothelium. Detected in alveolar and serosal epithelial cells as well as in endothelial cells in one day old rat. In adult lung, detected in rare endothelial cells.

It localises to the membrane. Its subcellular location is the caveola. The protein resides in the cytoplasm. It is found in the cytoskeleton. The protein localises to the golgi apparatus. It localises to the cell membrane. It catalyses the reaction 2 L-arginine + 3 NADPH + 4 O2 + H(+) = 2 L-citrulline + 2 nitric oxide + 3 NADP(+) + 4 H2O. With respect to regulation, stimulated by calcium/calmodulin. Inhibited by NOSIP and NOSTRIN. In terms of biological role, produces nitric oxide (NO) which is implicated in vascular smooth muscle relaxation through a cGMP-mediated signal transduction pathway. NO mediates vascular endothelial growth factor (VEGF)-induced angiogenesis in coronary vessels and promotes blood clotting through the activation of platelets. The sequence is that of Nitric oxide synthase 3 from Rattus norvegicus (Rat).